The sequence spans 457 residues: Flavohemoprotein-2 (457 aa).

The region spanning 2–157 is the Globin domain; the sequence is ALSEDTIKAV…LADLLIKREE (156 aa). His-106 provides a ligand contact to heme b. Catalysis depends on charge relay system residues Tyr-116 and Glu-156. Residues 168–456 form a reductase region; the sequence is GGWRQTRTFR…FEMFGPFKAS (289 aa). Positions 171 to 278 constitute an FAD-binding FR-type domain; that stretch reads RQTRTFRVEE…APPYGDFFLR (108 aa). FAD is bound by residues Tyr-210 and 227–230; that span reads RQYS. Residue 320-325 coordinates NADP(+); it reads GIGQTP. Residue 449–452 participates in FAD binding; the sequence is MFGP.

This sequence belongs to the globin family. Two-domain flavohemoproteins subfamily. The protein in the C-terminal section; belongs to the flavoprotein pyridine nucleotide cytochrome reductase family. As to quaternary structure, monomer. Requires heme b as cofactor. FAD serves as cofactor.

The enzyme catalyses 2 nitric oxide + NADPH + 2 O2 = 2 nitrate + NADP(+) + H(+). It catalyses the reaction 2 nitric oxide + NADH + 2 O2 = 2 nitrate + NAD(+) + H(+). Flavohemoprotein involved in nitric oxide (NO) detoxification in an aerobic process, termed nitric oxide dioxygenase (NOD) reaction that utilizes O(2) and NAD(P)H to convert NO to nitrate, which protects the protozoan parasite from various noxious nitrogen compounds. Therefore, plays a central role in the inducible response to nitrosative stress. May also be involved in O(2) detoxification. The sequence is that of Flavohemoprotein-2 (hmpA-2) from Giardia intestinalis (strain P15) (Giardia lamblia).